The primary structure comprises 245 residues: MRVGVLGARGKVGATMVAAVEAAEDLTFSAGVDAGDDLSLLTESKTEVVIDFTHPDVVMDNLKFVIDNGIHAVVGTTGFTWERIEQVEAWVKAKPGASVLIAPNFAIGAVLSMHFAKQAAKYFESVEIIELHHPHKADAPSGTAARTAKLIAEARKGLPPNPDATSTGLDGARGADVDGIPVHSVRLAGLVAHQEVLFGTQGETLTIRHDSLDRTSFVPGVLLAVRKISGLQGLTVGIEPLLDLS.

NAD(+)-binding positions include 7–12 (GARGKV), 75–77 (GTT), and 102–105 (APNF). The active-site Proton donor/acceptor is His132. His133 is a binding site for (S)-2,3,4,5-tetrahydrodipicolinate. The active-site Proton donor is Lys136. 142-143 (GT) contacts (S)-2,3,4,5-tetrahydrodipicolinate.

The protein belongs to the DapB family.

The protein localises to the cytoplasm. The enzyme catalyses (S)-2,3,4,5-tetrahydrodipicolinate + NAD(+) + H2O = (2S,4S)-4-hydroxy-2,3,4,5-tetrahydrodipicolinate + NADH + H(+). It catalyses the reaction (S)-2,3,4,5-tetrahydrodipicolinate + NADP(+) + H2O = (2S,4S)-4-hydroxy-2,3,4,5-tetrahydrodipicolinate + NADPH + H(+). It participates in amino-acid biosynthesis; L-lysine biosynthesis via DAP pathway; (S)-tetrahydrodipicolinate from L-aspartate: step 4/4. Functionally, catalyzes the conversion of 4-hydroxy-tetrahydrodipicolinate (HTPA) to tetrahydrodipicolinate. The chain is 4-hydroxy-tetrahydrodipicolinate reductase from Mycolicibacterium smegmatis (strain ATCC 700084 / mc(2)155) (Mycobacterium smegmatis).